The sequence spans 70 residues: Movement protein TGBp3 (70 aa).

At Met-1 to Asn-4 the chain is on the lumenal side. A helical membrane pass occupies residues Thr-5–Val-27. The Cytoplasmic segment spans residues Arg-28–His-70.

It belongs to the Tymovirales TGBp3 protein family.

It is found in the host endoplasmic reticulum membrane. Its function is as follows. Plays a role in viral cell-to-cell propagation, by facilitating genome transport to neighboring plant cells through plasmosdesmata. May induce the formation of granular vesicles derived from the endoplasmic reticulum, which align on actin filaments. This Brassica campestris (Field mustard) protein is Movement protein TGBp3.